Reading from the N-terminus, the 55-residue chain is Ribulose bisphosphate carboxylase large chain (55 aa).

His-18 (proton acceptor) is an active-site residue. The substrate site is built by Arg-19 and His-27.

This sequence belongs to the RuBisCO large chain family. Type I subfamily. Heterohexadecamer of 8 large chains and 8 small chains; disulfide-linked. The disulfide link is formed within the large subunit homodimers. Mg(2+) is required as a cofactor. Post-translationally, the disulfide bond which can form in the large chain dimeric partners within the hexadecamer appears to be associated with oxidative stress and protein turnover.

It is found in the plastid. The protein localises to the chloroplast. The catalysed reaction is 2 (2R)-3-phosphoglycerate + 2 H(+) = D-ribulose 1,5-bisphosphate + CO2 + H2O. The enzyme catalyses D-ribulose 1,5-bisphosphate + O2 = 2-phosphoglycolate + (2R)-3-phosphoglycerate + 2 H(+). Its function is as follows. RuBisCO catalyzes two reactions: the carboxylation of D-ribulose 1,5-bisphosphate, the primary event in carbon dioxide fixation, as well as the oxidative fragmentation of the pentose substrate in the photorespiration process. Both reactions occur simultaneously and in competition at the same active site. The chain is Ribulose bisphosphate carboxylase large chain from Vitis sp. (Grape).